The chain runs to 554 residues: Rab GTPase-binding effector protein 2 (554 aa).

The span at 1–15 (MAAAPAALALDPQPQ) shows a compositional bias: low complexity. Disordered regions lie at residues 1–29 (MAAA…ELSR), 167–250 (IQRR…ETAS), and 375–395 (EQLP…DEAL). The stretch at 15 to 173 (QEEQKDASES…IQEIQRRPRQ (159 aa)) forms a coiled coil. Over residues 16 to 29 (EEQKDASESSELSR) the composition is skewed to basic and acidic residues. Serine 176, serine 180, serine 187, and serine 191 each carry phosphoserine. Residues 274 to 512 (DSQWEQLQVE…LETSEQVQRD (239 aa)) adopt a coiled-coil conformation. The span at 377–386 (LPSSALQGSE) shows a compositional bias: polar residues.

Belongs to the rabaptin family. Heterodimer with RABGEF1. The dimer binds RAB5A that has been activated by GTP-binding. Interacts with SDCCAG8; this interaction is important for ciliogenesis regulation. Interacts with RAB4A; this interaction may mediate VEGFR2 cell surface expression.

Its subcellular location is the cytoplasm. It localises to the early endosome. It is found in the cytoskeleton. The protein resides in the microtubule organizing center. The protein localises to the centrosome. Its subcellular location is the cilium basal body. Functionally, plays a role in membrane trafficking and in homotypic early endosome fusion. Participates in arteriogenesis by regulating vascular endothelial growth factor receptor 2/VEGFR2 cell surface expression and endosomal trafficking. By interacting with SDCCAG8, localizes to centrosomes and plays a critical role in ciliogenesis. The polypeptide is Rab GTPase-binding effector protein 2 (Rabep2) (Rattus norvegicus (Rat)).